Here is a 145-residue protein sequence, read N- to C-terminus: Large ribosomal subunit protein uL16 (145 aa).

Residues 1 to 21 (MLVPTRVKHRKQHRGRMHGKA) show a composition bias toward basic residues. Residues 1–22 (MLVPTRVKHRKQHRGRMHGKAT) form a disordered region.

The protein belongs to the universal ribosomal protein uL16 family. As to quaternary structure, part of the 50S ribosomal subunit.

Its function is as follows. Binds 23S rRNA and is also seen to make contacts with the A and possibly P site tRNAs. The polypeptide is Large ribosomal subunit protein uL16 (Desulfitobacterium hafniense (strain Y51)).